Reading from the N-terminus, the 412-residue chain is Double C2-like domain-containing protein beta (412 aa).

Residues 1–36 (MTLRRRGEKATISIQEHMAIDVCPGPIRPIKQISDY) are negatively regulates targeting to plasma membrane. The mediates interaction with DYNLT1 stretch occupies residues 1–90 (MTLRRRGEKA…EDVDQLFGAY (90 aa)). The disordered stretch occupies residues 38–123 (PRFPRGLPPT…PDADGYESDD (86 aa)). Positions 49–73 (APRASAPPDAPARSPAATAGPRSPS) are enriched in low complexity. The span at 95-108 (GPSPGPSPVRPPAK) shows a compositional bias: pro residues. A compositionally biased stretch (acidic residues) spans 112–123 (DEPDADGYESDD). 2 consecutive C2 domains span residues 126-250 (ALGT…SICL) and 266-399 (ERGR…ERWH). Ca(2+) is bound by residues Asp-157, Asp-163, Asp-218, Asp-220, Asp-297, Asp-303, Asp-357, Asp-359, and Asp-365. Residues 257–375 (DKAEDKSLEE…FIGGVVLGIN (119 aa)) form a mediates interaction with STXBP3 region. Residue Ser-411 is modified to Phosphoserine.

As to quaternary structure, interacts with STX4; the interaction is calcium-dependent, increased by insulin and glucose, and mediates vesicle fusion with plasma membrane in pancreatic cells and adipocytes. Interacts with STXBP3; the interaction is direct, occurs at the cell membrane and regulates glucose-stimulated insulin secretion. Interacts with cytoplasmic dynein light chain DYNLT1. Interacts with the SNARE (soluble N-ethylmaleimide-sensitive factor attached protein receptor) complex composed of SNAP25, STX1A and VAMP2; the interaction is calcium-dependent and competitive with SYT1. May interact with UNC13A; the interaction mediates targeting to the plasma membrane. It depends on Ca(2+) as a cofactor. As to expression, expressed in brain; highly enriched in neurons.

Its subcellular location is the cytoplasm. It is found in the cytoplasmic granule. The protein resides in the cell membrane. Functionally, calcium sensor which positively regulates SNARE-dependent fusion of vesicles with membranes. Binds phospholipids in a calcium-dependent manner and may act at the priming stage of fusion by modifying membrane curvature to stimulate fusion. Involved in calcium-triggered exocytosis in chromaffin cells and calcium-dependent spontaneous release of neurotransmitter in absence of action potentials in neuronal cells. Involved both in glucose-stimulated insulin secretion in pancreatic cells and insulin-dependent GLUT4 transport to the plasma membrane in adipocytes. This chain is Double C2-like domain-containing protein beta (Doc2b), found in Rattus norvegicus (Rat).